The following is a 365-amino-acid chain: UDP-N-acetylglucosamine--N-acetylmuramyl-(pentapeptide) pyrophosphoryl-undecaprenol N-acetylglucosamine transferase (365 aa).

Residues 17-19 (TGG), Asn-129, Arg-167, Ser-194, Ile-250, 269-274 (ALTVSE), and Gln-295 each bind UDP-N-acetyl-alpha-D-glucosamine.

This sequence belongs to the glycosyltransferase 28 family. MurG subfamily.

It is found in the cell inner membrane. The enzyme catalyses di-trans,octa-cis-undecaprenyl diphospho-N-acetyl-alpha-D-muramoyl-L-alanyl-D-glutamyl-meso-2,6-diaminopimeloyl-D-alanyl-D-alanine + UDP-N-acetyl-alpha-D-glucosamine = di-trans,octa-cis-undecaprenyl diphospho-[N-acetyl-alpha-D-glucosaminyl-(1-&gt;4)]-N-acetyl-alpha-D-muramoyl-L-alanyl-D-glutamyl-meso-2,6-diaminopimeloyl-D-alanyl-D-alanine + UDP + H(+). It participates in cell wall biogenesis; peptidoglycan biosynthesis. Cell wall formation. Catalyzes the transfer of a GlcNAc subunit on undecaprenyl-pyrophosphoryl-MurNAc-pentapeptide (lipid intermediate I) to form undecaprenyl-pyrophosphoryl-MurNAc-(pentapeptide)GlcNAc (lipid intermediate II). In Shewanella halifaxensis (strain HAW-EB4), this protein is UDP-N-acetylglucosamine--N-acetylmuramyl-(pentapeptide) pyrophosphoryl-undecaprenol N-acetylglucosamine transferase.